The sequence spans 504 residues: Phosphoenolpyruvate carboxylase (504 aa).

A compositionally biased stretch (polar residues) spans 1–16 (MTSRKIPSIMGTQHPD). Residues 1–21 (MTSRKIPSIMGTQHPDNANAP) form a disordered region.

It belongs to the PEPCase type 2 family. Homotetramer. Requires Mg(2+) as cofactor.

The catalysed reaction is oxaloacetate + phosphate = phosphoenolpyruvate + hydrogencarbonate. Catalyzes the irreversible beta-carboxylation of phosphoenolpyruvate (PEP) to form oxaloacetate (OAA), a four-carbon dicarboxylic acid source for the tricarboxylic acid cycle. The sequence is that of Phosphoenolpyruvate carboxylase from Leuconostoc mesenteroides subsp. mesenteroides (strain ATCC 8293 / DSM 20343 / BCRC 11652 / CCM 1803 / JCM 6124 / NCDO 523 / NBRC 100496 / NCIMB 8023 / NCTC 12954 / NRRL B-1118 / 37Y).